Reading from the N-terminus, the 144-residue chain is Nucleoside diphosphate kinase (144 aa).

The ATP site is built by lysine 11, phenylalanine 59, arginine 87, threonine 93, arginine 104, and asparagine 114. Histidine 117 (pros-phosphohistidine intermediate) is an active-site residue.

Belongs to the NDK family. In terms of assembly, homotetramer. It depends on Mg(2+) as a cofactor.

The protein resides in the cytoplasm. The catalysed reaction is a 2'-deoxyribonucleoside 5'-diphosphate + ATP = a 2'-deoxyribonucleoside 5'-triphosphate + ADP. It carries out the reaction a ribonucleoside 5'-diphosphate + ATP = a ribonucleoside 5'-triphosphate + ADP. In terms of biological role, major role in the synthesis of nucleoside triphosphates other than ATP. The ATP gamma phosphate is transferred to the NDP beta phosphate via a ping-pong mechanism, using a phosphorylated active-site intermediate. This Baumannia cicadellinicola subsp. Homalodisca coagulata protein is Nucleoside diphosphate kinase.